A 428-amino-acid polypeptide reads, in one-letter code: Adenylosuccinate synthetase (428 aa).

GTP is bound by residues 11-17 (GDEGKGK) and 39-41 (GHT). The active-site Proton acceptor is D12. Mg(2+) contacts are provided by D12 and G39. Residues 12–15 (DEGK), 37–40 (NAGH), T130, R144, N226, T241, and R305 contribute to the IMP site. H40 serves as the catalytic Proton donor. Residue 301-307 (VTTGRKR) coordinates substrate. GTP is bound by residues R307, 333–335 (KLD), and 415–417 (GTG).

The protein belongs to the adenylosuccinate synthetase family. In terms of assembly, homodimer. Requires Mg(2+) as cofactor.

It localises to the cytoplasm. It catalyses the reaction IMP + L-aspartate + GTP = N(6)-(1,2-dicarboxyethyl)-AMP + GDP + phosphate + 2 H(+). It functions in the pathway purine metabolism; AMP biosynthesis via de novo pathway; AMP from IMP: step 1/2. Plays an important role in the de novo pathway and in the salvage pathway of purine nucleotide biosynthesis. Catalyzes the first committed step in the biosynthesis of AMP from IMP. The polypeptide is Adenylosuccinate synthetase (Candida dubliniensis (strain CD36 / ATCC MYA-646 / CBS 7987 / NCPF 3949 / NRRL Y-17841) (Yeast)).